Reading from the N-terminus, the 460-residue chain is ATP synthase subunit beta (460 aa).

150 to 157 (GGAGVGKT) contributes to the ATP binding site.

It belongs to the ATPase alpha/beta chains family. F-type ATPases have 2 components, CF(1) - the catalytic core - and CF(0) - the membrane proton channel. CF(1) has five subunits: alpha(3), beta(3), gamma(1), delta(1), epsilon(1). CF(0) has three main subunits: a(1), b(2) and c(9-12). The alpha and beta chains form an alternating ring which encloses part of the gamma chain. CF(1) is attached to CF(0) by a central stalk formed by the gamma and epsilon chains, while a peripheral stalk is formed by the delta and b chains.

The protein resides in the cell inner membrane. It carries out the reaction ATP + H2O + 4 H(+)(in) = ADP + phosphate + 5 H(+)(out). Its function is as follows. Produces ATP from ADP in the presence of a proton gradient across the membrane. The catalytic sites are hosted primarily by the beta subunits. The chain is ATP synthase subunit beta from Yersinia enterocolitica serotype O:8 / biotype 1B (strain NCTC 13174 / 8081).